The primary structure comprises 346 residues: N(4)-(beta-N-acetylglucosaminyl)-L-asparaginase (346 aa).

The signal sequence occupies residues 1 to 23 (MERKSNLSLLLLLLVLGMPLVRG). Residue asparagine 38 is glycosylated (N-linked (GlcNAc...) asparagine). Disulfide bonds link cysteine 64–cysteine 69 and cysteine 163–cysteine 179. Residue threonine 206 is the Nucleophile of the active site. Substrate contacts are provided by residues 234 to 237 (RVGD) and 257 to 260 (TGDG). Cysteine 286 and cysteine 306 are disulfide-bonded. Asparagine 310 carries an N-linked (GlcNAc...) asparagine glycan. Cysteine 317 and cysteine 345 are disulfide-bonded.

This sequence belongs to the Ntn-hydrolase family. As to quaternary structure, heterotetramer of two alpha and two beta chains arranged as a dimer of alpha/beta heterodimers. In terms of processing, cleaved into an alpha and beta chain by autocatalysis; this activates the enzyme. The N-terminal residue of the beta subunit is responsible for the nucleophile hydrolase activity. Post-translationally, N-glycosylated.

It localises to the lysosome. The enzyme catalyses N(4)-(beta-N-acetyl-D-glucosaminyl)-L-asparagine + H2O = N-acetyl-beta-D-glucosaminylamine + L-aspartate + H(+). Cleaves the GlcNAc-Asn bond which joins oligosaccharides to the peptide of asparagine-linked glycoproteins. In Mus musculus (Mouse), this protein is N(4)-(beta-N-acetylglucosaminyl)-L-asparaginase (Aga).